We begin with the raw amino-acid sequence, 175 residues long: Epididymal-specific lipocalin-8 (175 aa).

Positions 1–22 (MEARLLSNVCGFFLVFLLQAES) are cleaved as a signal peptide. Residues N66 and N74 are each glycosylated (N-linked (GlcNAc...) asparagine). C79 and C166 form a disulfide bridge.

This sequence belongs to the calycin superfamily. Lipocalin family. As to expression, predominantly expressed in epididymis.

The protein resides in the secreted. May play a role in male fertility. May act as a retinoid carrier protein within the epididymis. The polypeptide is Epididymal-specific lipocalin-8 (Lcn8) (Mus musculus (Mouse)).